The chain runs to 864 residues: DNA mismatch repair protein MutS (864 aa).

An ATP-binding site is contributed by glycine 607–serine 614.

Belongs to the DNA mismatch repair MutS family.

In terms of biological role, this protein is involved in the repair of mismatches in DNA. It is possible that it carries out the mismatch recognition step. This protein has a weak ATPase activity. The polypeptide is DNA mismatch repair protein MutS (Neisseria gonorrhoeae (strain NCCP11945)).